The sequence spans 181 residues: Adenylate kinase 2 (181 aa).

An ATP-binding site is contributed by 10–15 (GSGKST). An NMP region spans residues 30–59 (SMGGILREAIANATPLGIKAKPYVERGDLL). AMP contacts are provided by residues Arg-36, 57–59 (DLL), 85–88 (GYPR), and Gln-92. Residues 126 to 132 (NRSLFDD) form an LID region. Arg-127 is a binding site for ATP. Residue Arg-140 coordinates AMP. Pro-168 is a binding site for ATP.

Belongs to the adenylate kinase family. Monomer.

The protein localises to the cytoplasm. The catalysed reaction is AMP + ATP = 2 ADP. Its pathway is purine metabolism; AMP biosynthesis via salvage pathway; AMP from ADP: step 1/1. Catalyzes the reversible transfer of the terminal phosphate group between ATP and AMP. Plays an important role in cellular energy homeostasis and in adenine nucleotide metabolism. The chain is Adenylate kinase 2 from Synechocystis sp. (strain ATCC 27184 / PCC 6803 / Kazusa).